The chain runs to 513 residues: Cyclin-dependent kinase C-2 (513 aa).

Residues 25 to 325 (FEKLEQIGEG…AKDALDAEYF (301 aa)) form the Protein kinase domain. ATP is bound by residues 31 to 39 (IGEGTYGQV) and lysine 54. Phosphothreonine is present on threonine 35. Tyrosine 36 carries the post-translational modification Phosphotyrosine. Aspartate 164 serves as the catalytic Proton acceptor. Serine 191 carries the phosphoserine modification. A Phosphothreonine modification is found at threonine 198. The span at 336-348 (SLPKYEASHEFQT) shows a compositional bias: basic and acidic residues. The disordered stretch occupies residues 336–513 (SLPKYEASHE…RNQQQYGNWQ (178 aa)). Over residues 417–433 (PNRYPQGGNQGGYNPNR) the composition is skewed to low complexity. Composition is skewed to gly residues over residues 457-478 (GGGMGGAGGPRGGGGSGYGVGG) and 485-494 (GPYGASGPGR). Residues 497–513 (NYNQGGSRNQQQYGNWQ) show a composition bias toward polar residues.

Belongs to the protein kinase superfamily. CMGC Ser/Thr protein kinase family. CDC2/CDKX subfamily.

It carries out the reaction L-seryl-[protein] + ATP = O-phospho-L-seryl-[protein] + ADP + H(+). The enzyme catalyses L-threonyl-[protein] + ATP = O-phospho-L-threonyl-[protein] + ADP + H(+). The catalysed reaction is [DNA-directed RNA polymerase] + ATP = phospho-[DNA-directed RNA polymerase] + ADP + H(+). The sequence is that of Cyclin-dependent kinase C-2 (CDKC-2) from Oryza sativa subsp. japonica (Rice).